We begin with the raw amino-acid sequence, 554 residues long: Dihydroxy-acid dehydratase (554 aa).

Asp-78 is a binding site for Mg(2+). [2Fe-2S] cluster is bound at residue Cys-119. Mg(2+) contacts are provided by Asp-120 and Lys-121. At Lys-121 the chain carries N6-carboxylysine. Cys-191 provides a ligand contact to [2Fe-2S] cluster. Glu-442 is a Mg(2+) binding site. The active-site Proton acceptor is Ser-468.

The protein belongs to the IlvD/Edd family. In terms of assembly, homodimer. Requires [2Fe-2S] cluster as cofactor. The cofactor is Mg(2+).

The catalysed reaction is (2R)-2,3-dihydroxy-3-methylbutanoate = 3-methyl-2-oxobutanoate + H2O. The enzyme catalyses (2R,3R)-2,3-dihydroxy-3-methylpentanoate = (S)-3-methyl-2-oxopentanoate + H2O. Its pathway is amino-acid biosynthesis; L-isoleucine biosynthesis; L-isoleucine from 2-oxobutanoate: step 3/4. It participates in amino-acid biosynthesis; L-valine biosynthesis; L-valine from pyruvate: step 3/4. Its function is as follows. Functions in the biosynthesis of branched-chain amino acids. Catalyzes the dehydration of (2R,3R)-2,3-dihydroxy-3-methylpentanoate (2,3-dihydroxy-3-methylvalerate) into 2-oxo-3-methylpentanoate (2-oxo-3-methylvalerate) and of (2R)-2,3-dihydroxy-3-methylbutanoate (2,3-dihydroxyisovalerate) into 2-oxo-3-methylbutanoate (2-oxoisovalerate), the penultimate precursor to L-isoleucine and L-valine, respectively. This is Dihydroxy-acid dehydratase from Hydrogenobaculum sp. (strain Y04AAS1).